Consider the following 338-residue polypeptide: Rho GTPase-activating protein gacA (338 aa).

The region spanning N149 to H327 is the Rho-GAP domain.

It is found in the cytoplasm. Its function is as follows. Rho GTPase-activating protein involved in the signal transduction pathway. The sequence is that of Rho GTPase-activating protein gacA (gacA) from Dictyostelium discoideum (Social amoeba).